The following is a 590-amino-acid chain: Aspartate--tRNA(Asp/Asn) ligase (590 aa).

Residue glutamate 175 coordinates L-aspartate. The tract at residues 199–202 (QQYK) is aspartate. L-aspartate-binding residues include arginine 221 and histidine 450. ATP is bound at residue 221-223 (RDE). Glutamate 484 serves as a coordination point for ATP. Arginine 491 provides a ligand contact to L-aspartate. 536 to 539 (GVDR) is a binding site for ATP.

It belongs to the class-II aminoacyl-tRNA synthetase family. Type 1 subfamily. As to quaternary structure, homodimer.

It localises to the cytoplasm. It carries out the reaction tRNA(Asx) + L-aspartate + ATP = L-aspartyl-tRNA(Asx) + AMP + diphosphate. Aspartyl-tRNA synthetase with relaxed tRNA specificity since it is able to aspartylate not only its cognate tRNA(Asp) but also tRNA(Asn). Reaction proceeds in two steps: L-aspartate is first activated by ATP to form Asp-AMP and then transferred to the acceptor end of tRNA(Asp/Asn). The protein is Aspartate--tRNA(Asp/Asn) ligase of Rhodopseudomonas palustris (strain BisB5).